Here is a 205-residue protein sequence, read N- to C-terminus: MGGTFDPIHHGHLVAASEVQAWFDLDEVLFVPTGDPWQKSDRDVSPAEHRYLMTVIATAANPRFTVSRVDIDRSGPTYTIDTLRDLRAQLPDAELYFITGVDALAEIFTWRDAEELFTLARFVGCTRPGYLMDDAALATIPTDRVTIVEIPALAISSTDCRRRSQRGEPVWYLVPDGVVQYLAKYDLYPRVIPPDTTKDTSEDMQ.

It belongs to the NadD family.

It carries out the reaction nicotinate beta-D-ribonucleotide + ATP + H(+) = deamido-NAD(+) + diphosphate. It functions in the pathway cofactor biosynthesis; NAD(+) biosynthesis; deamido-NAD(+) from nicotinate D-ribonucleotide: step 1/1. Its function is as follows. Catalyzes the reversible adenylation of nicotinate mononucleotide (NaMN) to nicotinic acid adenine dinucleotide (NaAD). This chain is Probable nicotinate-nucleotide adenylyltransferase, found in Nocardioides sp. (strain ATCC BAA-499 / JS614).